Consider the following 532-residue polypeptide: Flavin-containing monooxygenase 3 (532 aa).

FAD contacts are provided by residues 9 to 13 (GAGVS), Glu-32, 40 to 41 (LW), and 61 to 62 (NS). NADP(+) is bound by residues 60–61 (TN) and 195–198 (SGCD). Ser-401 carries the post-translational modification Phosphoserine. The helical transmembrane segment at 510–530 (FFFHWLKPFAIPILLIAVFLG) threads the bilayer.

Belongs to the FMO family. The cofactor is FAD. In terms of tissue distribution, liver.

The protein resides in the microsome membrane. It localises to the endoplasmic reticulum membrane. The catalysed reaction is trimethylamine + NADPH + O2 = trimethylamine N-oxide + NADP(+) + H2O. The enzyme catalyses N,N-dimethylaniline + NADPH + O2 + H(+) = N,N-dimethylaniline N-oxide + NADP(+) + H2O. It carries out the reaction hypotaurine + NADPH + O2 + H(+) = taurine + NADP(+) + H2O. It catalyses the reaction (S)-nicotine + NADPH + O2 = trans-(S)-nicotine N(1')-oxide + NADP(+) + H2O. The catalysed reaction is albendazole + NADPH + O2 + H(+) = albendazole S-oxide + NADP(+) + H2O. Functionally, essential hepatic enzyme that catalyzes the oxygenation of a wide variety of nitrogen- and sulfur-containing compounds including drugs as well as dietary compounds. Plays an important role in the metabolism of trimethylamine (TMA), via the production of trimethylamine N-oxide (TMAO) metabolite. TMA is generated by the action of gut microbiota using dietary precursors such as choline, choline containing compounds, betaine or L-carnitine. By regulating TMAO concentration, FMO3 directly impacts both platelet responsiveness and rate of thrombus formation. This is Flavin-containing monooxygenase 3 (FMO3) from Macaca mulatta (Rhesus macaque).